The chain runs to 117 residues: uncharacterized protein (117 aa).

Residues arginine 96 to glutamate 117 are disordered.

This is an uncharacterized protein from Saccharomyces cerevisiae (strain ATCC 204508 / S288c) (Baker's yeast).